The chain runs to 152 residues: UPF0178 protein NIS_0137 (152 aa).

The protein belongs to the UPF0178 family.

The sequence is that of UPF0178 protein NIS_0137 from Nitratiruptor sp. (strain SB155-2).